A 255-amino-acid chain; its full sequence is Trans-aconitate 2-methyltransferase (255 aa).

It belongs to the methyltransferase superfamily. Tam family.

The protein localises to the cytoplasm. It catalyses the reaction trans-aconitate + S-adenosyl-L-methionine = (E)-3-(methoxycarbonyl)pent-2-enedioate + S-adenosyl-L-homocysteine. In terms of biological role, catalyzes the S-adenosylmethionine monomethyl esterification of trans-aconitate. The sequence is that of Trans-aconitate 2-methyltransferase from Mycolicibacterium gilvum (strain PYR-GCK) (Mycobacterium gilvum (strain PYR-GCK)).